A 351-amino-acid chain; its full sequence is Thiamine-phosphate synthase (351 aa).

A unknown region spans residues 1 to 128 (MKNPNIIQPE…SKIASEIRYE (128 aa)). Positions 129 to 351 (IYTLEIEILN…IIIKELSHEN (223 aa)) are thiamine-phosphate synthase. Residues 180 to 184 (QHRFK) and Asn212 contribute to the 4-amino-2-methyl-5-(diphosphooxymethyl)pyrimidine site. Positions 213 and 232 each coordinate Mg(2+). Ser251 is a 4-amino-2-methyl-5-(diphosphooxymethyl)pyrimidine binding site. 2-[(2R,5Z)-2-carboxy-4-methylthiazol-5(2H)-ylidene]ethyl phosphate is bound at residue 277–279 (TLT). Lys280 serves as a coordination point for 4-amino-2-methyl-5-(diphosphooxymethyl)pyrimidine. Residues Gly307 and 327–328 (VS) contribute to the 2-[(2R,5Z)-2-carboxy-4-methylthiazol-5(2H)-ylidene]ethyl phosphate site.

Belongs to the thiamine-phosphate synthase family.

The catalysed reaction is 2-[(2R,5Z)-2-carboxy-4-methylthiazol-5(2H)-ylidene]ethyl phosphate + 4-amino-2-methyl-5-(diphosphooxymethyl)pyrimidine + 2 H(+) = thiamine phosphate + CO2 + diphosphate. The enzyme catalyses 2-(2-carboxy-4-methylthiazol-5-yl)ethyl phosphate + 4-amino-2-methyl-5-(diphosphooxymethyl)pyrimidine + 2 H(+) = thiamine phosphate + CO2 + diphosphate. It carries out the reaction 4-methyl-5-(2-phosphooxyethyl)-thiazole + 4-amino-2-methyl-5-(diphosphooxymethyl)pyrimidine + H(+) = thiamine phosphate + diphosphate. Its pathway is cofactor biosynthesis; thiamine diphosphate biosynthesis; thiamine phosphate from 4-amino-2-methyl-5-diphosphomethylpyrimidine and 4-methyl-5-(2-phosphoethyl)-thiazole: step 1/1. Functionally, condenses 4-methyl-5-(beta-hydroxyethyl)thiazole monophosphate (THZ-P) and 2-methyl-4-amino-5-hydroxymethyl pyrimidine pyrophosphate (HMP-PP) to form thiamine monophosphate (TMP). The chain is Thiamine-phosphate synthase from Prochlorococcus marinus subsp. pastoris (strain CCMP1986 / NIES-2087 / MED4).